A 172-amino-acid polypeptide reads, in one-letter code: MSASIRDAGVADLPGILAIYNDAVGNTTAIWNETPVDLANRQAWFDTRARQGYPILVASDAAGEVLGYASYGDWRPFEGFRGTVEHSVYVRDDQRGKGLGVQLLQALIERARAQGLHVMVAAIESGNAASIGLHRRLGFEISGQMPQVGQKFGRWLDLTFMQLNLDPTRSAP.

Residues 3-166 enclose the N-acetyltransferase domain; the sequence is ASIRDAGVAD…DLTFMQLNLD (164 aa). Residues 75 to 77 and 85 to 87 contribute to the substrate site; these read RPF and EHS. Acetyl-CoA is bound by residues 88-90, 96-101, and Asn-127; these read VYV and GKGLGV.

As to quaternary structure, homodimer.

It carries out the reaction L-methionine sulfoximine + acetyl-CoA = N-acetyl-L-methionine sulfoximine + CoA + H(+). The enzyme catalyses L-methionine sulfone + acetyl-CoA = N-acetyl-L-methionine sulfone + CoA + H(+). In terms of biological role, plays a role in the resistance against the toxic effects of L-methionine sulfoximine (MSX), a rare amino acid, which inhibits glutamine synthetase (GlnA). Catalyzes the acetylation of L-methionine sulfoximine (MSX). The protein is L-methionine sulfoximine/L-methionine sulfone acetyltransferase of Pseudomonas aeruginosa (strain ATCC 15692 / DSM 22644 / CIP 104116 / JCM 14847 / LMG 12228 / 1C / PRS 101 / PAO1).